Consider the following 196-residue polypeptide: MTATISLATLFGEARSQNGWLDRDVPDARLREIYDQMKFGPTSVNCSPARIVFVRSMEAKQKLAGAVAPANVDKVMNAPVVAIVGYDTRFYDRLPELFPHNPAVKSWFEGPEKAAFAETTAFRNGTLQGAYLIMAARAVGLDCGPMSGFNNAAVDAAFFAGTTIRSNFICGLGHGDPGRVFPRSPRLAFEQACTLA.

The protein belongs to the nitroreductase family. HadB/RutE subfamily. It depends on FMN as a cofactor.

This chain is Putative NADH dehydrogenase/NAD(P)H nitroreductase HadB (hadB), found in Ralstonia pickettii (Burkholderia pickettii).